The sequence spans 953 residues: Translation initiation factor IF-2 (953 aa).

2 disordered regions span residues 52–241 and 279–363; these read KASK…QQEA and TKLK…TERK. 3 stretches are compositionally biased toward basic and acidic residues: residues 80-89, 98-111, and 140-188; these read TGSEHVEKTQ, FKAEREARAKEQAA, and QGDK…ENHK. The span at 191–207 shows a compositional bias: polar residues; that stretch reads RFTNQKKQGRQEPQSKS. Positions 229–241 are enriched in basic and acidic residues; sequence RQSETRFRAQQEA. Over residues 282–291 the composition is skewed to polar residues; that stretch reads KSSNISAKST. Residues 300–317 show a composition bias toward basic and acidic residues; it reads ARPEKNRELTHHSQEGQK. The segment covering 322–338 has biased composition (low complexity); sequence SWNSQNQVRNQKNSNWN. Residues 339 to 348 show a composition bias toward basic residues; sequence KNKKTKKGKN. One can recognise a tr-type G domain in the interval 454–623; that stretch reads ERAPVVTIMG…LLVAEVEELK (170 aa). Positions 463 to 470 are G1; it reads GHVDHGKT. Residue 463–470 coordinates GTP; it reads GHVDHGKT. A G2 region spans residues 488–492; that stretch reads GITQH. The tract at residues 509–512 is G3; it reads DTPG. GTP-binding positions include 509 to 513 and 563 to 566; these read DTPGH and NKID. The G4 stretch occupies residues 563 to 566; the sequence is NKID. The interval 599–601 is G5; the sequence is SAK.

The protein belongs to the TRAFAC class translation factor GTPase superfamily. Classic translation factor GTPase family. IF-2 subfamily.

The protein resides in the cytoplasm. One of the essential components for the initiation of protein synthesis. Protects formylmethionyl-tRNA from spontaneous hydrolysis and promotes its binding to the 30S ribosomal subunits. Also involved in the hydrolysis of GTP during the formation of the 70S ribosomal complex. This Streptococcus pyogenes serotype M4 (strain MGAS10750) protein is Translation initiation factor IF-2.